Consider the following 359-residue polypeptide: RNA-binding protein 4B (359 aa).

2 RRM domains span residues 2 to 72 (VKLF…ASKN) and 78 to 148 (TKLH…LSTS). The CCHC-type zinc-finger motif lies at 160–177 (SGCYRCGKEGHWSKECPV). The interaction with TNPO3 stretch occupies residues 196–359 (AVRTPYTMGY…YVDRARYSAF (164 aa)).

Interacts with TNPO3, which may mediate nuclear import of the protein. Expressed in liver and kidney (at protein level). Ubiquitously expressed.

The protein localises to the nucleus. The protein resides in the nucleolus. In terms of biological role, required for the translational activation of PER1 mRNA in response to circadian clock. Binds directly to the 3'-UTR of the PER1 mRNA. The protein is RNA-binding protein 4B (RBM4B) of Homo sapiens (Human).